A 213-amino-acid polypeptide reads, in one-letter code: Uridine kinase (213 aa).

15–22 contributes to the ATP binding site; that stretch reads GGSGSGKT.

It belongs to the uridine kinase family.

Its subcellular location is the cytoplasm. The catalysed reaction is uridine + ATP = UMP + ADP + H(+). The enzyme catalyses cytidine + ATP = CMP + ADP + H(+). It functions in the pathway pyrimidine metabolism; CTP biosynthesis via salvage pathway; CTP from cytidine: step 1/3. It participates in pyrimidine metabolism; UMP biosynthesis via salvage pathway; UMP from uridine: step 1/1. The sequence is that of Uridine kinase from Ligilactobacillus salivarius (strain UCC118) (Lactobacillus salivarius).